Here is a 123-residue protein sequence, read N- to C-terminus: DNA-directed RNA polymerase I subunit RPA12 (123 aa).

Cys-17, Cys-20, Cys-35, Cys-38, Cys-84, and Cys-87 together coordinate Zn(2+). The segment at 17–38 adopts a C4-type zinc-finger fold; sequence CPDCGSVLPLPGVQDTVICPRC. Residues 80–120 form a TFIIS-type zinc finger; it reads VDRRCSRCGHEGMAYYTRQMRSADEGQTVFYTCINCKFQEK. The Hairpin motif lies at 103–104; the sequence is DE. Positions 112 and 115 each coordinate Zn(2+).

Belongs to the archaeal RpoM/eukaryotic RPA12/RPB9/RPC11 RNA polymerase family. Component of the RNA polymerase I (Pol I) complex consisting of 13 subunits: a ten-subunit catalytic core composed of POLR1A/RPA1, POLR1B/RPA2, POLR1C/RPAC1, POLR1D/RPAC2, POLR1H/RPA12, POLR2E/RPABC1, POLR2F/RPABC2, POLR2H/RPABC3, POLR2K/RPABC4 and POLR2L/RPABC5; a mobile stalk subunit POLR1F/RPA43 protruding from the core and additional subunits homologous to general transcription factors POLR1E/RPA49 and POLR1G/RPA34. Part of Pol I pre-initiation complex (PIC), in which Pol I core assembles with RRN3 and promoter-bound UTBF and SL1/TIF-IB complex.

The protein resides in the nucleus. Its subcellular location is the nucleolus. In terms of biological role, core component of RNA polymerase I (Pol I), a DNA-dependent RNA polymerase which synthesizes ribosomal RNA precursors using the four ribonucleoside triphosphates as substrates. Can mediate Pol I proofreading of the nascent RNA transcript. Anchors into the Pol I active site to monitor transcription fidelity and cleave mis-incorporated 5'-ribonucleotides. This Rattus norvegicus (Rat) protein is DNA-directed RNA polymerase I subunit RPA12.